A 424-amino-acid polypeptide reads, in one-letter code: Zinc finger and BTB domain-containing protein 6 (424 aa).

In terms of domain architecture, BTB spans 33–97 (CDVSIYINDT…CYTGALEVKR (65 aa)). S202 is subject to Phosphoserine. C2H2-type zinc fingers lie at residues 301–323 (HQCPRCPRGFLHVENYLRHLKMH), 326–348 (FLCLQCGKTFTQKKNLNRHIRGH), 354–376 (FQCTVCLKTFTAKSTLQDHLNIH), and 382–405 (YKCHCCDMDFKHKSALKKHLTSVH). The interval 402–424 (TSVHGRSSGEKLSRPDLKRQSLL) is disordered. The span at 408–424 (SSGEKLSRPDLKRQSLL) shows a compositional bias: basic and acidic residues.

As to expression, widely expressed with highest levels in brain.

The protein resides in the nucleus. In terms of biological role, may be involved in transcriptional regulation. This chain is Zinc finger and BTB domain-containing protein 6 (ZBTB6), found in Homo sapiens (Human).